The following is a 330-amino-acid chain: D-lactate dehydrogenase (330 aa).

NAD(+) is bound by residues 156–157 (RI), D176, 206–207 (VP), 233–235 (AAR), and D259. Residue R235 is part of the active site. E264 is a catalytic residue. The Proton donor role is filled by H296.

This sequence belongs to the D-isomer specific 2-hydroxyacid dehydrogenase family.

The enzyme catalyses (R)-lactate + NAD(+) = pyruvate + NADH + H(+). This chain is D-lactate dehydrogenase (ldhD), found in Staphylococcus epidermidis (strain ATCC 35984 / DSM 28319 / BCRC 17069 / CCUG 31568 / BM 3577 / RP62A).